Consider the following 280-residue polypeptide: Elongation factor Ts (280 aa).

The involved in Mg(2+) ion dislocation from EF-Tu stretch occupies residues T79 to V82.

This sequence belongs to the EF-Ts family.

It is found in the cytoplasm. Associates with the EF-Tu.GDP complex and induces the exchange of GDP to GTP. It remains bound to the aminoacyl-tRNA.EF-Tu.GTP complex up to the GTP hydrolysis stage on the ribosome. The sequence is that of Elongation factor Ts from Vibrio vulnificus (strain CMCP6).